We begin with the raw amino-acid sequence, 307 residues long: MLKQEDILQDLKSLIPEDIIKVNEPLKRYTYTETGGNADFYLSPTKNEDVQAIVRYAKEKDIPVTYLGNGSNIIIREGGIRGIVISLLSLNHINVSDDAIIAGSGSAIIDVSRAARDHVLTGLEFACGIPGSVGGAVYMNAGAYGGEIKDCIDYALCVNEEGDLIQFTNKELELDYRNSIVQKQHLVVLEAAFTLEPGKLDEIQAKMDDLTERRESKQPLEYPSCGSVFQRPPGHFAGKLIQDSDLQGYRVGGVEVSKKHAGFMVNVDNGTATDYEDLIHHVQKVVKEKFDVELHREVRIIGEHPKE.

Positions 34–198 constitute an FAD-binding PCMH-type domain; it reads TGGNADFYLS…LEAAFTLEPG (165 aa). Arginine 177 is a catalytic residue. The active-site Proton donor is the serine 227. Glutamate 297 is an active-site residue.

This sequence belongs to the MurB family. FAD is required as a cofactor.

It is found in the cytoplasm. It catalyses the reaction UDP-N-acetyl-alpha-D-muramate + NADP(+) = UDP-N-acetyl-3-O-(1-carboxyvinyl)-alpha-D-glucosamine + NADPH + H(+). Its pathway is cell wall biogenesis; peptidoglycan biosynthesis. Its function is as follows. Cell wall formation. The protein is UDP-N-acetylenolpyruvoylglucosamine reductase of Staphylococcus haemolyticus (strain JCSC1435).